Here is a 438-residue protein sequence, read N- to C-terminus: 3-phosphoshikimate 1-carboxyvinyltransferase (438 aa).

3-phosphoshikimate contacts are provided by Lys26, Ser27, and Arg31. A phosphoenolpyruvate-binding site is contributed by Lys26. The phosphoenolpyruvate site is built by Gly99 and Arg127. 3-phosphoshikimate contacts are provided by Ser170, Ser171, Gln172, Ser199, Glu314, and His343. Gln172 serves as a coordination point for phosphoenolpyruvate. Residue Glu314 is the Proton acceptor of the active site. The phosphoenolpyruvate site is built by Arg347, Arg388, and Lys413.

Belongs to the EPSP synthase family. In terms of assembly, monomer.

It is found in the cytoplasm. It catalyses the reaction 3-phosphoshikimate + phosphoenolpyruvate = 5-O-(1-carboxyvinyl)-3-phosphoshikimate + phosphate. It functions in the pathway metabolic intermediate biosynthesis; chorismate biosynthesis; chorismate from D-erythrose 4-phosphate and phosphoenolpyruvate: step 6/7. In terms of biological role, catalyzes the transfer of the enolpyruvyl moiety of phosphoenolpyruvate (PEP) to the 5-hydroxyl of shikimate-3-phosphate (S3P) to produce enolpyruvyl shikimate-3-phosphate and inorganic phosphate. The chain is 3-phosphoshikimate 1-carboxyvinyltransferase from Mycobacterium sp. (strain MCS).